A 700-amino-acid polypeptide reads, in one-letter code: DNA ligase (700 aa).

Residues 61 to 65 (DAEYD), 110 to 111 (SL), and Glu-141 each bind NAD(+). Lys-143 (N6-AMP-lysine intermediate) is an active-site residue. The NAD(+) site is built by Arg-164, Glu-202, Lys-321, and Lys-345. Cys-439, Cys-442, Cys-457, and Cys-462 together coordinate Zn(2+). A BRCT domain is found at 619–700 (AVSNKLAGLQ…EFLRLLEDSK (82 aa)).

Belongs to the NAD-dependent DNA ligase family. LigA subfamily. Mg(2+) is required as a cofactor. Requires Mn(2+) as cofactor.

It catalyses the reaction NAD(+) + (deoxyribonucleotide)n-3'-hydroxyl + 5'-phospho-(deoxyribonucleotide)m = (deoxyribonucleotide)n+m + AMP + beta-nicotinamide D-nucleotide.. Functionally, DNA ligase that catalyzes the formation of phosphodiester linkages between 5'-phosphoryl and 3'-hydroxyl groups in double-stranded DNA using NAD as a coenzyme and as the energy source for the reaction. It is essential for DNA replication and repair of damaged DNA. The polypeptide is DNA ligase (Hydrogenobaculum sp. (strain Y04AAS1)).